Reading from the N-terminus, the 245-residue chain is tRNA pseudouridine synthase A 2 (245 aa).

Asp53 (nucleophile) is an active-site residue. Tyr111 is a substrate binding site.

Belongs to the tRNA pseudouridine synthase TruA family. In terms of assembly, homodimer.

The catalysed reaction is uridine(38/39/40) in tRNA = pseudouridine(38/39/40) in tRNA. Formation of pseudouridine at positions 38, 39 and 40 in the anticodon stem and loop of transfer RNAs. The protein is tRNA pseudouridine synthase A 2 of Bacillus cereus (strain ATCC 10987 / NRS 248).